Reading from the N-terminus, the 60-residue chain is Antimicrobial peptide Eval151 (60 aa).

The signal sequence occupies residues 1–23 (MKVLPVLFLTLLVLISIPAETFC). Arginine 36 bears the Arginine amide mark. Over residues 36–54 (RGKRNDFFRSDVSRDDESH) the composition is skewed to basic and acidic residues. Positions 36–60 (RGKRNDFFRSDVSRDDESHPSPGQK) are disordered. Positions 37–60 (GKRNDFFRSDVSRDDESHPSPGQK) are excised as a propeptide.

Belongs to the non-disulfide-bridged peptide (NDBP) superfamily. As to expression, expressed by the venom gland.

Its subcellular location is the secreted. In terms of biological role, probable antimicrobial peptide. Has no inhibitory activity against herpes simplex virus type 1 (HSV-1). This is Antimicrobial peptide Eval151 from Euscorpiops validus (Scorpion).